We begin with the raw amino-acid sequence, 431 residues long: Glutamyl-tRNA(Gln) amidotransferase subunit A (431 aa).

Active-site charge relay system residues include Lys55 and Ser130. The active-site Acyl-ester intermediate is the Ser154.

This sequence belongs to the amidase family. GatA subfamily. In terms of assembly, heterotrimer of A, B and C subunits.

The catalysed reaction is L-glutamyl-tRNA(Gln) + L-glutamine + ATP + H2O = L-glutaminyl-tRNA(Gln) + L-glutamate + ADP + phosphate + H(+). Allows the formation of correctly charged Gln-tRNA(Gln) through the transamidation of misacylated Glu-tRNA(Gln) in organisms which lack glutaminyl-tRNA synthetase. The reaction takes place in the presence of glutamine and ATP through an activated gamma-phospho-Glu-tRNA(Gln). This is Glutamyl-tRNA(Gln) amidotransferase subunit A from Methanococcus maripaludis (strain DSM 14266 / JCM 13030 / NBRC 101832 / S2 / LL).